A 175-amino-acid polypeptide reads, in one-letter code: Peptidyl-prolyl cis-trans isomerase B (175 aa).

The PPIase cyclophilin-type domain maps to 3–172 (EQLYATLKTN…EDVVIESVVV (170 aa)).

The protein belongs to the cyclophilin-type PPIase family.

It is found in the cytoplasm. The enzyme catalyses [protein]-peptidylproline (omega=180) = [protein]-peptidylproline (omega=0). Inhibited by cyclosporin A (CsA). Its function is as follows. PPIases accelerate the folding of proteins. It catalyzes the cis-trans isomerization of proline imidic peptide bonds in oligopeptides. The sequence is that of Peptidyl-prolyl cis-trans isomerase B (cypB) from Streptomyces anulatus (Streptomyces chrysomallus).